The chain runs to 303 residues: Ferrochelatase (303 aa).

Residues His185 and Glu262 each coordinate Fe cation.

It belongs to the ferrochelatase family.

The protein localises to the cytoplasm. It catalyses the reaction heme b + 2 H(+) = protoporphyrin IX + Fe(2+). The protein operates within porphyrin-containing compound metabolism; protoheme biosynthesis; protoheme from protoporphyrin-IX: step 1/1. Its function is as follows. Catalyzes the ferrous insertion into protoporphyrin IX. This is Ferrochelatase from Campylobacter jejuni subsp. doylei (strain ATCC BAA-1458 / RM4099 / 269.97).